The primary structure comprises 140 residues: Large ribosomal subunit protein bL17 (140 aa).

It belongs to the bacterial ribosomal protein bL17 family. Part of the 50S ribosomal subunit. Contacts protein L32.

This Paramagnetospirillum magneticum (strain ATCC 700264 / AMB-1) (Magnetospirillum magneticum) protein is Large ribosomal subunit protein bL17.